We begin with the raw amino-acid sequence, 231 residues long: NKG2-C type II integral membrane protein (231 aa).

A compositionally biased stretch (polar residues) spans 1 to 12 (MNKQRGTFSEVS). The interval 1-32 (MNKQRGTFSEVSLAQDPKRQQRKPKGNKSSIS) is disordered. Residues 1-70 (MNKQRGTFSE…CQGLLPPPEK (70 aa)) lie on the Cytoplasmic side of the membrane. A helical; Signal-anchor for type II membrane protein transmembrane segment spans residues 71–93 (LTAEVLGIICIVLMATVLKTIVL). Residues 94-231 (IPFLEQNNFS…SMIYHCKHKL (138 aa)) are Extracellular-facing. N100 is a glycosylation site (N-linked (GlcNAc...) asparagine). One can recognise a C-type lectin domain in the interval 116–229 (HCPEEWITYS…GSSMIYHCKH (114 aa)). Cystine bridges form between C117/C128, C145/C227, and C206/C219. Residues N149 and N178 are each glycosylated (N-linked (GlcNAc...) asparagine).

As to quaternary structure, heterodimer with KLRD1; disulfide-linked. KLRD1-KLRC2 receptor complex interacts with TYROBP homodimer; this interaction is necessary for the expression on the cell surface. KLRD1-KLRC2 receptor complex can bind with low affinity to HLA-E loaded with self-peptides derived from the signal sequence of classical MHC class Ia. As to expression, expressed in NK cell subsets, in particular in adaptive CD57-positive NK cells (at protein level). Expressed in terminally differentiated cytotoxic gamma-delta T cells (at protein level). Expressed in alpha-beta T cells subsets (at protein level). KLRD1-KLRC1 and KLRD1-KLRC2 are differentially expressed within NK and T cell populations, with only minor subsets expressing both receptor complexes (at protein level).

The protein localises to the cell membrane. Functionally, immune activating receptor involved in self-nonself discrimination. In complex with KLRD1 on cytotoxic lymphocyte subsets, recognizes non-classical major histocompatibility (MHC) class Ib HLA-E loaded with signal sequence-derived peptides from non-classical MHC class Ib HLA-G molecules, likely playing a role in the generation and effector functions of adaptive natural killer (NK) cells and in maternal-fetal tolerance during pregnancy. Regulates the effector functions of terminally differentiated cytotoxic lymphocyte subsets, and in particular may play a role in adaptive NK cell response to viral infection. Upon HLA-E-peptide binding, transmits intracellular signals via the adapter protein TYROBP/DAP12, triggering the phosphorylation of proximal signaling molecules and cell activation. The protein is NKG2-C type II integral membrane protein (KLRC2) of Homo sapiens (Human).